A 329-amino-acid polypeptide reads, in one-letter code: DNA repair and recombination protein RadA (329 aa).

107 to 114 lines the ATP pocket; that stretch reads GEFGSGKS.

It belongs to the eukaryotic RecA-like protein family.

Involved in DNA repair and in homologous recombination. Binds and assemble on single-stranded DNA to form a nucleoprotein filament. Hydrolyzes ATP in a ssDNA-dependent manner and promotes DNA strand exchange between homologous DNA molecules. The chain is DNA repair and recombination protein RadA from Methanocorpusculum labreanum (strain ATCC 43576 / DSM 4855 / Z).